The primary structure comprises 256 residues: Protein FixA (256 aa).

This sequence belongs to the ETF beta-subunit/FixA family. In terms of assembly, heterodimer of FixA and FixB.

The protein operates within amine and polyamine metabolism; carnitine metabolism. Its function is as follows. Required for anaerobic carnitine reduction. May bring reductant to CaiA. This chain is Protein FixA, found in Salmonella dublin (strain CT_02021853).